A 279-amino-acid polypeptide reads, in one-letter code: Shikimate dehydrogenase (NADP(+)) (279 aa).

Shikimate is bound by residues 21–23 and threonine 68; that span reads SMS. Lysine 72 (proton acceptor) is an active-site residue. Positions 93 and 108 each coordinate shikimate. NADP(+) contacts are provided by residues 130 to 134 and leucine 219; that span reads GAGGA. Tyrosine 221 serves as a coordination point for shikimate. Residue glycine 242 coordinates NADP(+).

Belongs to the shikimate dehydrogenase family. As to quaternary structure, homodimer.

It carries out the reaction shikimate + NADP(+) = 3-dehydroshikimate + NADPH + H(+). It functions in the pathway metabolic intermediate biosynthesis; chorismate biosynthesis; chorismate from D-erythrose 4-phosphate and phosphoenolpyruvate: step 4/7. Its function is as follows. Involved in the biosynthesis of the chorismate, which leads to the biosynthesis of aromatic amino acids. Catalyzes the reversible NADPH linked reduction of 3-dehydroshikimate (DHSA) to yield shikimate (SA). This chain is Shikimate dehydrogenase (NADP(+)), found in Oleidesulfovibrio alaskensis (strain ATCC BAA-1058 / DSM 17464 / G20) (Desulfovibrio alaskensis).